We begin with the raw amino-acid sequence, 292 residues long: 33 kDa chaperonin (292 aa).

Disulfide bonds link Cys230–Cys232 and Cys263–Cys266.

Belongs to the HSP33 family. In terms of processing, under oxidizing conditions two disulfide bonds are formed involving the reactive cysteines. Under reducing conditions zinc is bound to the reactive cysteines and the protein is inactive.

The protein localises to the cytoplasm. Its function is as follows. Redox regulated molecular chaperone. Protects both thermally unfolding and oxidatively damaged proteins from irreversible aggregation. Plays an important role in the bacterial defense system toward oxidative stress. The protein is 33 kDa chaperonin of Shigella dysenteriae serotype 1 (strain Sd197).